The chain runs to 393 residues: Bifunctional chrysanthemol synthase, chloroplastic (393 aa).

Residues 1–18 show a composition bias toward low complexity; it reads MACSSSLSSKWASWGASS. Positions 1 to 22 are disordered; that stretch reads MACSSSLSSKWASWGASSRPHP. A chloroplast-targeting transit peptide spans 1-53; sequence MACSSSLSSKWASWGASSRPHPSVQPFVTRKNVVRYHKPTSELSYSPLTTTLS. The dimethylallyl diphosphate site is built by lysine 99, arginine 102, and glutamine 137. Positions 144 and 148 each coordinate Mg(2+). Dimethylallyl diphosphate-binding residues include arginine 153, arginine 154, lysine 241, glutamine 280, aspartate 287, lysine 297, and lysine 306.

The protein belongs to the FPP/GGPP synthase family. Mg(2+) is required as a cofactor. As to expression, restricted to glandular trichomes during achene maturation. Expressed in flowers and in both ray and disk florets.

The protein localises to the plastid. It localises to the chloroplast. It catalyses the reaction 2 dimethylallyl diphosphate = (R,R)-chrysanthemyl diphosphate + diphosphate. The enzyme catalyses (R,R)-chrysanthemyl diphosphate + H2O = (R,R)-chrysanthemol + diphosphate. It carries out the reaction (R)-lavandulyl diphosphate + H2O = (R)-lavandulol + diphosphate. It functions in the pathway isoprenoid biosynthesis. Functionally, component of the monoterpenoid pyrethrins biosynthesis; pyrethrins are widely used plant-derived pesticide. Catalyzes the condensation of two molecules of dimethylallyl diphosphate to produce chrysanthemyl diphosphate (CPP), a monoterpene with a non-head-to-tail or irregular c1'-2-3 linkage between isoprenoid units. In a second step, hydrolyzes the diphosphate moiety of CPP to form chrysanthemol. With a lower efficiency, can also converts dimethylallyl diphosphate into lavandulyl diphosphate (LPP), and subsequently LPP into lavandulol. The protein is Bifunctional chrysanthemol synthase, chloroplastic of Tanacetum cinerariifolium (Dalmatian daisy).